A 418-amino-acid chain; its full sequence is Tryptophan synthase beta chain (418 aa).

The span at Met1–Gln17 shows a compositional bias: polar residues. The tract at residues Met1–Gly23 is disordered. Lys111 carries the N6-(pyridoxal phosphate)lysine modification.

The protein belongs to the TrpB family. As to quaternary structure, tetramer of two alpha and two beta chains. Pyridoxal 5'-phosphate serves as cofactor.

It catalyses the reaction (1S,2R)-1-C-(indol-3-yl)glycerol 3-phosphate + L-serine = D-glyceraldehyde 3-phosphate + L-tryptophan + H2O. It functions in the pathway amino-acid biosynthesis; L-tryptophan biosynthesis; L-tryptophan from chorismate: step 5/5. In terms of biological role, the beta subunit is responsible for the synthesis of L-tryptophan from indole and L-serine. The chain is Tryptophan synthase beta chain from Synechococcus sp. (strain CC9605).